A 120-amino-acid polypeptide reads, in one-letter code: Glycine cleavage system H protein (120 aa).

Residues 17–99 (VATVGITAHA…QGGGWLYRLK (83 aa)) enclose the Lipoyl-binding domain. Lys58 is modified (N6-lipoyllysine).

This sequence belongs to the GcvH family. The glycine cleavage system is composed of four proteins: P, T, L and H. (R)-lipoate is required as a cofactor.

Its function is as follows. The glycine cleavage system catalyzes the degradation of glycine. The H protein shuttles the methylamine group of glycine from the P protein to the T protein. The polypeptide is Glycine cleavage system H protein (Methylorubrum extorquens (strain CM4 / NCIMB 13688) (Methylobacterium extorquens)).